The chain runs to 593 residues: NADH-quinone oxidoreductase subunit C/D (593 aa).

The interval 1–184 (MTADTAVSIP…DPFSLTLAKQ (184 aa)) is NADH dehydrogenase I subunit C. An NADH dehydrogenase I subunit D region spans residues 208-593 (DYMFLNLGPN…IDFVMADVDR (386 aa)).

It in the N-terminal section; belongs to the complex I 30 kDa subunit family. In the C-terminal section; belongs to the complex I 49 kDa subunit family. NDH-1 is composed of 13 different subunits. Subunits NuoB, CD, E, F, and G constitute the peripheral sector of the complex.

The protein localises to the cell inner membrane. It carries out the reaction a quinone + NADH + 5 H(+)(in) = a quinol + NAD(+) + 4 H(+)(out). NDH-1 shuttles electrons from NADH, via FMN and iron-sulfur (Fe-S) centers, to quinones in the respiratory chain. The immediate electron acceptor for the enzyme in this species is believed to be ubiquinone. Couples the redox reaction to proton translocation (for every two electrons transferred, four hydrogen ions are translocated across the cytoplasmic membrane), and thus conserves the redox energy in a proton gradient. In Ectopseudomonas mendocina (strain ymp) (Pseudomonas mendocina), this protein is NADH-quinone oxidoreductase subunit C/D.